Reading from the N-terminus, the 70-residue chain is Small ribosomal subunit protein bS21B (70 aa).

It belongs to the bacterial ribosomal protein bS21 family.

The protein is Small ribosomal subunit protein bS21B of Paraburkholderia xenovorans (strain LB400).